A 247-amino-acid chain; its full sequence is NAD(P)H-quinone oxidoreductase subunit K (247 aa).

[4Fe-4S] cluster-binding residues include C63, C64, C128, and C159. Positions T218–A247 are disordered.

It belongs to the complex I 20 kDa subunit family. NDH-1 can be composed of about 15 different subunits; different subcomplexes with different compositions have been identified which probably have different functions. [4Fe-4S] cluster is required as a cofactor.

It localises to the cellular thylakoid membrane. The enzyme catalyses a plastoquinone + NADH + (n+1) H(+)(in) = a plastoquinol + NAD(+) + n H(+)(out). It carries out the reaction a plastoquinone + NADPH + (n+1) H(+)(in) = a plastoquinol + NADP(+) + n H(+)(out). Functionally, NDH-1 shuttles electrons from an unknown electron donor, via FMN and iron-sulfur (Fe-S) centers, to quinones in the respiratory and/or the photosynthetic chain. The immediate electron acceptor for the enzyme in this species is believed to be plastoquinone. Couples the redox reaction to proton translocation, and thus conserves the redox energy in a proton gradient. Cyanobacterial NDH-1 also plays a role in inorganic carbon-concentration. This Crocosphaera subtropica (strain ATCC 51142 / BH68) (Cyanothece sp. (strain ATCC 51142)) protein is NAD(P)H-quinone oxidoreductase subunit K.